Reading from the N-terminus, the 419-residue chain is Oxamate carbamoyltransferase subunit AllG (419 aa).

This sequence belongs to the AllG family. In terms of assembly, the OXTCase is composed of 3 subunits, AllF, AllG and AllH. Requires Mg(2+) as cofactor.

The enzyme catalyses oxamate + carbamoyl phosphate = N-carbamoyl-2-oxoglycine + phosphate. It participates in nitrogen metabolism; (S)-allantoin degradation. Functionally, component of a carbamoyltransferase involved in the anaerobic nitrogen utilization via the assimilation of allantoin. Catalyzes the conversion of oxalurate (N-carbamoyl-2-oxoglycine) to oxamate and carbamoyl phosphate. The polypeptide is Oxamate carbamoyltransferase subunit AllG (Escherichia coli (strain K12)).